The sequence spans 549 residues: Thermosome subunit alpha (549 aa).

The interval 529-549 (EGRQGAECPPNGCMGGMDMRM) is disordered.

The protein belongs to the TCP-1 chaperonin family. Forms a Heterooligomeric complex of two stacked eight-membered rings.

Functionally, molecular chaperone; binds unfolded polypeptides in vitro, and has a weak ATPase activity. This Thermococcus sp. (strain KS-8) protein is Thermosome subunit alpha (thsA).